The sequence spans 305 residues: Oxygen-dependent coproporphyrinogen-III oxidase (305 aa).

Ser-98 is a binding site for substrate. A divalent metal cation is bound by residues His-102 and His-112. The active-site Proton donor is His-112. Residue 114–116 participates in substrate binding; that stretch reads NVR. Residues His-151 and His-181 each coordinate a divalent metal cation. The interval 246–281 is important for dimerization; it reads YVEFNLVYDRGTLFGLQSGGRTESILMSMPPLARWE. 264–266 is a substrate binding site; that stretch reads GGR.

The protein belongs to the aerobic coproporphyrinogen-III oxidase family. As to quaternary structure, homodimer. Requires a divalent metal cation as cofactor.

It is found in the cytoplasm. The catalysed reaction is coproporphyrinogen III + O2 + 2 H(+) = protoporphyrinogen IX + 2 CO2 + 2 H2O. It participates in porphyrin-containing compound metabolism; protoporphyrin-IX biosynthesis; protoporphyrinogen-IX from coproporphyrinogen-III (O2 route): step 1/1. Its function is as follows. Involved in the heme biosynthesis. Catalyzes the aerobic oxidative decarboxylation of propionate groups of rings A and B of coproporphyrinogen-III to yield the vinyl groups in protoporphyrinogen-IX. This Vibrio campbellii (strain ATCC BAA-1116) protein is Oxygen-dependent coproporphyrinogen-III oxidase.